We begin with the raw amino-acid sequence, 514 residues long: Protein Tube (514 aa).

Disordered regions lie at residues 226–250 (VPQQ…RSSR), 255–274 (TASN…SNTA), 324–343 (LDAG…STST), 366–385 (ASDA…VPDM), and 413–514 (NGAK…ELQQ). Residues 259–274 (VAPTTASNAPSASNTA) are compositionally biased toward low complexity. The span at 422 to 433 (ADNNSSGTNSLS) shows a compositional bias: polar residues. Over residues 434–460 (NDDDEQKEDDDDDDDDDVVDVDDEEAD) the composition is skewed to acidic residues. Positions 477–514 (TTVTCTSGENSFEFTNDSSSASNDDYTNNIPNLSELQQ) are enriched in polar residues.

As to expression, maternal and zygotic gene product.

The protein localises to the cytoplasm. Required for the determination of embryonic dorsoventral polarity. Is involved in transduction of information regulating nuclear import of dorsal protein. The protein is Protein Tube (tub) of Drosophila virilis (Fruit fly).